Here is a 489-residue protein sequence, read N- to C-terminus: Aklavinone 12-hydroxylase DnrF (489 aa).

FAD contacts are provided by residues 17-18 (LG), E37, Q121, and L145. The active-site Proton acceptor is Y224. Residue D308 participates in FAD binding. G317 lines the aklavinone pocket. The interval 402–428 (VAAEDDDPEPTEDPRRPSGRPGFRAPH) is disordered.

This sequence belongs to the PheA/TfdB FAD monooxygenase family. Monomer. FAD serves as cofactor.

It catalyses the reaction aklavinone + NADPH + O2 + H(+) = epsilon-rhodomycinone + NADP(+) + H2O. It functions in the pathway antibiotic biosynthesis; daunorubicin biosynthesis. Its pathway is antibiotic biosynthesis; carminomycin biosynthesis. The protein operates within antibiotic biosynthesis; rhodomycin biosynthesis. It participates in antibiotic biosynthesis; doxorubicin biosynthesis. In terms of biological role, involved in the biosynthesis of the anthracyclines carminomycin, rhodomycin, daunorubicin (daunomycin) and doxorubicin (adriamycin) which are aromatic polyketide antibiotics that exhibit high cytotoxicity and are widely applied in the chemotherapy of a variety of cancers. Catalyzes the incorporation of a hydroxyl group at position C-11 of aklavinone, resulting in epsilon-rhodomycinone. This Streptomyces peucetius subsp. caesius protein is Aklavinone 12-hydroxylase DnrF (dnrF).